The chain runs to 154 residues: 6,7-dimethyl-8-ribityllumazine synthase (154 aa).

Residues Trp-22, 56–58, and 80–82 each bind 5-amino-6-(D-ribitylamino)uracil; these read SHE and AVI. 85–86 lines the (2S)-2-hydroxy-3-oxobutyl phosphate pocket; that stretch reads DT. His-88 serves as the catalytic Proton donor. Phe-113 contributes to the 5-amino-6-(D-ribitylamino)uracil binding site. Arg-127 serves as a coordination point for (2S)-2-hydroxy-3-oxobutyl phosphate.

It belongs to the DMRL synthase family.

It catalyses the reaction (2S)-2-hydroxy-3-oxobutyl phosphate + 5-amino-6-(D-ribitylamino)uracil = 6,7-dimethyl-8-(1-D-ribityl)lumazine + phosphate + 2 H2O + H(+). Its pathway is cofactor biosynthesis; riboflavin biosynthesis; riboflavin from 2-hydroxy-3-oxobutyl phosphate and 5-amino-6-(D-ribitylamino)uracil: step 1/2. In terms of biological role, catalyzes the formation of 6,7-dimethyl-8-ribityllumazine by condensation of 5-amino-6-(D-ribitylamino)uracil with 3,4-dihydroxy-2-butanone 4-phosphate. This is the penultimate step in the biosynthesis of riboflavin. The sequence is that of 6,7-dimethyl-8-ribityllumazine synthase from Deinococcus geothermalis (strain DSM 11300 / CIP 105573 / AG-3a).